We begin with the raw amino-acid sequence, 520 residues long: Ribonuclease Y (520 aa).

Residues 4–24 form a helical membrane-spanning segment; it reads TMFTIISILLSLICLVVGYFV. Residues 210–273 enclose the KH domain; the sequence is TVSVVNLPND…ETARIALDKL (64 aa). Residues 336-429 form the HD domain; sequence VLKHSIEVAH…VAAADALSAA (94 aa).

The protein belongs to the RNase Y family.

The protein localises to the cell membrane. Its function is as follows. Endoribonuclease that initiates mRNA decay. The sequence is that of Ribonuclease Y from Bacillus pumilus (strain SAFR-032).